A 163-amino-acid chain; its full sequence is MAKLHRLISAVLRLAAAGAAAAAAVIMVTSHETTSLFGIEMEAKYSYTPSFVFFVVAFAVTFAYSLLAAVLVRPGTTASRLVLLSDVTVGMLLTGAVAATGAISQVGKSGNEHAGWLPICAQVQAYCGHVMGALIAGFVSLLLYFLIIMYSLHAVAEPLCSCH.

Residues 1-7 (MAKLHRL) are Cytoplasmic-facing. A helical transmembrane segment spans residues 8-28 (ISAVLRLAAAGAAAAAAVIMV). The Extracellular segment spans residues 29–50 (TSHETTSLFGIEMEAKYSYTPS). A helical transmembrane segment spans residues 51-71 (FVFFVVAFAVTFAYSLLAAVL). Over 72-80 (VRPGTTASR) the chain is Cytoplasmic. Residues 81-101 (LVLLSDVTVGMLLTGAVAATG) form a helical membrane-spanning segment. The Extracellular segment spans residues 102-129 (AISQVGKSGNEHAGWLPICAQVQAYCGH). Residues 130–150 (VMGALIAGFVSLLLYFLIIMY) traverse the membrane as a helical segment. Over 151-163 (SLHAVAEPLCSCH) the chain is Cytoplasmic.

This sequence belongs to the Casparian strip membrane proteins (CASP) family. In terms of assembly, homodimer and heterodimers.

The protein localises to the cell membrane. In Zea mays (Maize), this protein is CASP-like protein 1C2.